A 470-amino-acid polypeptide reads, in one-letter code: Argininosuccinate lyase (470 aa).

The protein belongs to the lyase 1 family. Argininosuccinate lyase subfamily.

The protein resides in the cytoplasm. The catalysed reaction is 2-(N(omega)-L-arginino)succinate = fumarate + L-arginine. Its pathway is amino-acid biosynthesis; L-arginine biosynthesis; L-arginine from L-ornithine and carbamoyl phosphate: step 3/3. The sequence is that of Argininosuccinate lyase from Mycobacterium tuberculosis (strain CDC 1551 / Oshkosh).